The primary structure comprises 603 residues: MTMYTTMTTLTLTPLILPILTTLINPNKKNSYPHYVKSIIASTFIISLFPTTMFMCLDQEAIISNWHWATTQTTQLSLSFKLDYFSMTFIPVALFVTWAIMEFSLWYMNSDPNINQFFKYLLIFLITMLILVTANNLFQLFIGWEGVGIMSFLLISWWYARTDANTAAIQAILYNRIGDIGFILALAWFLLHSNSWDPQQMVLLSTNPSLTPLLGFLLAAAGKSAQLGLHPWLPSAMEGPTPVSALLHSSTMVVAGVFLLIRFHPLAENNPLIQTLTLCLGAITTLFAAICALTQNDIKKIVAFSTSSQLGLMMVTIGINQPHLAFLHICTHAFFKAMLFMCSGSIIHNLNNEQDIRKMGGLLKTMPLTSTSLIIGSLALAGMPFLTGFYSKDLIIETANMSYMNAWALSITLIATSLTSAYSTRMILLTLMGQPRFPTLTNINENNPTLLNPIKRLTIGSLFAGFFITNNILPMSTSQMTIPLYLKLTALSVTFLGLLTALDLNYLTNKLKMKSPPYTFYFSNMLGFYPNIMHRSIPYLGLLTSQNLPLLLLDLTWLEKLLPKTISQYQVSASITTSTQKGMIKLYFLSFLFPLILTLLLIM.

16 helical membrane passes run tyrosine 4–isoleucine 24, serine 38–aspartate 58, methionine 87–tyrosine 107, leucine 122–isoleucine 142, tryptophan 144–alanine 160, alanine 171–leucine 191, threonine 211–leucine 233, threonine 241–isoleucine 261, leucine 272–alanine 292, isoleucine 301–asparagine 320, alanine 325–isoleucine 347, serine 370–tyrosine 390, tryptophan 407–leucine 429, leucine 457–threonine 477, isoleucine 482–leucine 502, and methionine 583–methionine 603.

It belongs to the complex I subunit 5 family. As to quaternary structure, core subunit of respiratory chain NADH dehydrogenase (Complex I) which is composed of 45 different subunits.

The protein resides in the mitochondrion inner membrane. The enzyme catalyses a ubiquinone + NADH + 5 H(+)(in) = a ubiquinol + NAD(+) + 4 H(+)(out). In terms of biological role, core subunit of the mitochondrial membrane respiratory chain NADH dehydrogenase (Complex I) which catalyzes electron transfer from NADH through the respiratory chain, using ubiquinone as an electron acceptor. Essential for the catalytic activity and assembly of complex I. This Pan paniscus (Pygmy chimpanzee) protein is NADH-ubiquinone oxidoreductase chain 5 (MT-ND5).